The following is a 217-amino-acid chain: Elongation factor Ts (217 aa).

Residues 81 to 84 are involved in Mg(2+) ion dislocation from EF-Tu; it reads TDFV.

It belongs to the EF-Ts family.

The protein resides in the cytoplasm. Associates with the EF-Tu.GDP complex and induces the exchange of GDP to GTP. It remains bound to the aminoacyl-tRNA.EF-Tu.GTP complex up to the GTP hydrolysis stage on the ribosome. In Myxococcus xanthus (strain DK1622), this protein is Elongation factor Ts.